Here is a 469-residue protein sequence, read N- to C-terminus: Probable NADPH:adrenodoxin oxidoreductase, mitochondrial (469 aa).

A mitochondrion-targeting transit peptide spans 1–38 (MLSRFIKRTYSTQTSSPVVGIIGSGPAAFYTAHRLLRN). The FAD site is built by alanine 27, glutamate 48, leucine 56, and valine 92. Residues 164–167 (HGNV), 208–209 (RR), and glutamate 220 contribute to the NADP(+) site. FAD is bound by residues tryptophan 375 and 382–384 (GVI). Position 382 (glycine 382) interacts with NADP(+).

This sequence belongs to the ferredoxin--NADP reductase type 1 family. FAD is required as a cofactor.

The protein resides in the mitochondrion inner membrane. It carries out the reaction 2 reduced [adrenodoxin] + NADP(+) + H(+) = 2 oxidized [adrenodoxin] + NADPH. Adrenodoxin reductase transfers electrons from NADPH to adrenodoxin, which is involved in heme A biosynthesis and in iron-sulfur cluster assembly. Involved in the electron transfer to heme A synthase etp1(cd), a heme protein that catalyzes the conversion of heme O to heme A. Required for the de novo synthesis of Fe-S clusters on iron sulfur cluster assembly protein isu1. Involved in electron delivery for Fe-S cluster synthesis. Essential for coenzyme Q biosynthesis. May be involved in the electron transfer required for the hydroxylation reaction performed by coq6. May play a role in cellular and mitochondrial iron homeostasis. In Schizosaccharomyces pombe (strain 972 / ATCC 24843) (Fission yeast), this protein is Probable NADPH:adrenodoxin oxidoreductase, mitochondrial (arh1).